The chain runs to 185 residues: Regulatory protein RecX (185 aa).

This sequence belongs to the RecX family.

Its subcellular location is the cytoplasm. Its function is as follows. Modulates RecA activity. The sequence is that of Regulatory protein RecX from Thermobifida fusca (strain YX).